Consider the following 503-residue polypeptide: MSNIYNIEILQIIDSVAREKGISKEILISTVEQAVQVAGRKKYGNEYNIKAQINRKTGEINLLRILKIVEDVEDYLTQISLEDALVKNPEAKIGDEIYEYLPPIDHARVSAQAAKQVITQRVIEAEREKQYHDFKDRKGDIINGIVKRIEYGDIIVDLSRAEAIIKKDQLIKGEHFKPNDRIKAYVQDVRQETKGPQIFLSRVDNQMLVKLFKLEVPEILEDIIQIKSVARDPGSKAKIAVFASDSSIDPVGSCVGIRGNRVKAVTNELNGEKIDIVLWSNDLAQFIVNSLIPLAPSEITKILIDEDSHKVEVVVSQEHQSIAIGRRGQNVRLASKLTGWNIDIMTEEQESKRRNEEFSTSTELFMEALDVEEVIGQLLSVTGFNSVEQIASSEISTLTRIEGFEEELAVEIKNRAIHYVDLKNEKIIKKLEELGVEQELIDILELPLELILKFAEYGIKTIEDLGEMSVNEFKNLAPNSNITDENIKLLIKTARHHGELKDS.

Residues 139–203 form the S1 motif domain; it reads GDIINGIVKR…KGPQIFLSRV (65 aa). The KH domain maps to 308 to 378; the sequence is SHKVEVVVSQ…LDVEEVIGQL (71 aa).

Belongs to the NusA family. Monomer. Binds directly to the core enzyme of the DNA-dependent RNA polymerase and to nascent RNA.

The protein localises to the cytoplasm. In terms of biological role, participates in both transcription termination and antitermination. This is Transcription termination/antitermination protein NusA from Rickettsia prowazekii (strain Madrid E).